The chain runs to 1350 residues: Nidogen (1350 aa).

An N-terminal signal peptide occupies residues 1-22 (MPTFGSKLLACLLLSSVILVSG). The NIDO domain occupies 107-260 (AFYSNVDTSF…GVWLFEVAPI (154 aa)). The N-linked (GlcNAc...) asparagine glycan is linked to N231. Positions 281-321 (LALSCQAHAHQCHEKAECHDKAEGYCCVCGSGFYGNGKSCL) constitute an EGF-like 1 domain. Cystine bridges form between C285/C298, C292/C307, and C309/C320. The Nidogen G2 beta-barrel domain maps to 325-550 (QPIRVTGTLT…GVTPESNACN (226 aa)). N-linked (GlcNAc...) asparagine glycans are attached at residues N423 and N480. In terms of domain architecture, EGF-like 2 spans 545–583 (ESNACNDGTADCVENSVCVPYEDTYRCDCYHGFAAQLDE). Cystine bridges form between C549–C562, C556–C571, C595–C608, C602–C617, and C619–C630. Residues 591–631 (DIDECATGSHVCDENAVCDNTEGGFNCYCTEGFEGNGYRCL) form the EGF-like 3; calcium-binding domain. N-linked (GlcNAc...) asparagine glycosylation occurs at N633. The tract at residues 645-691 (VEGQAEPTSEPSPNPSPYPDQGQDQEREREDDQYPQPNPYPYPEEQI) is disordered. 5 consecutive EGF-like domains span residues 788–829 (DLIP…YNCD), 832–874 (SDDS…FNCQ), 912–953 (PAGR…TGCT), 955–996 (KPLS…YVCI), and 997–1037 (EEQN…SLCQ). 15 disulfides stabilise this stretch: C792–C804, C798–C815, C817–C828, C836–C849, C843–C860, C862–C873, C916–C927, C921–C938, C940–C952, C959–C971, C965–C982, C984–C995, C1001–C1014, C1008–C1023, and C1025–C1036. N801 carries N-linked (GlcNAc...) asparagine glycosylation. N-linked (GlcNAc...) asparagine glycosylation occurs at N1032. LDL-receptor class B repeat units lie at residues 1084-1126 (GRVY…DVIS), 1127-1170 (RRLY…DPYR), 1171-1216 (EKLF…LENS), and 1257-1282 (DQFY…QTPI).

As to expression, expressed in the basement membrane around the follicular epithelium of the adult ovary (at protein level).

The protein resides in the secreted. Its subcellular location is the extracellular space. It localises to the extracellular matrix. It is found in the basement membrane. Functionally, cell adhesion glycoprotein which is widely distributed in basement membranes. Involved in cell-extracellular matrix (ECM) interactions probably by connecting the laminin and collagen IV networks. Required for permeability and mechanical stability of basement membranes, and ECM dependent neural plasticity. Not involved in assembly of the embryonic basement membrane. In Drosophila melanogaster (Fruit fly), this protein is Nidogen.